We begin with the raw amino-acid sequence, 460 residues long: MKTIAIVGRPNVGKSLLFNRLCGKEISLVYDQPGVTRDRIVCCIKKEGKEIVLVDTGGLVFDCQTDLAKSLFDQISMAVEEAHHILFVVDGRTGLLPLDKQIAKFLREKHKAVTVVVNKLDHPGMEHFCAEFANLGFEEIFAVSAAHNLGINQLLEKIFSLGAEERENPIFAPSTRIAVIGQPNAGKSSLINSLIGESRLVVHEEPGTTHDAVEVGIEVCGVPFTFIDTAGLKKKNKLQEGLEIKVSGRTVHSINRSHLVWFIIDGQKGITLQDKKIGGLIQKAFKPCMVILNKIDLLEDRLNLKEGNKKGMLYVQEQLPFLSYAPVVVVSAEKKWNFKTLLSTLLRVDQERKKRIPTHRLTQFFQETLNQYPPPQVQGKRLKIYYATQIYDKEGSGGSPCPTFILFVNNPNCIKETYQKFLEKQFRQAFCFRGCPLLWKWRKAEGKGESSLHQDVILSR.

EngA-type G domains follow at residues 2-166 (KTIA…AEER) and 175-353 (TRIA…QERK). GTP-binding positions include 8 to 15 (GRPNVGKS), 55 to 59 (DTGGL), 118 to 121 (NKLD), 181 to 188 (GQPNAGKS), 228 to 232 (DTAGL), and 293 to 296 (NKID). The KH-like domain occupies 354 to 446 (KRIPTHRLTQ…LLWKWRKAEG (93 aa)).

This sequence belongs to the TRAFAC class TrmE-Era-EngA-EngB-Septin-like GTPase superfamily. EngA (Der) GTPase family. Associates with the 50S ribosomal subunit.

Its function is as follows. GTPase that plays an essential role in the late steps of ribosome biogenesis. The protein is GTPase Der of Methylacidiphilum infernorum (isolate V4) (Methylokorus infernorum (strain V4)).